A 136-amino-acid chain; its full sequence is MAKAIPKKGSRGRIGSRKSIRKIPKGVIHIQASFNNTIVTVTDVRGRVVSWSSAGTCGFRGTRRGTPFAAQTAAANAIRAVVDQGMQRAEVMIKGPGLGRDAALRAIRRSGILLTFVRDVTPMPHNGCRPPKKRRV.

This sequence belongs to the universal ribosomal protein uS11 family. As to quaternary structure, part of the 30S ribosomal subunit.

The protein localises to the plastid. It localises to the chloroplast. The protein is Small ribosomal subunit protein uS11c of Guizotia abyssinica (Niger).